The sequence spans 295 residues: Transcription factor bHLH19 (295 aa).

The region spanning 115–164 (VLAKEHVLAERKRREKLSEKFIALSALLPGLKKADKVTILDDAISRMKQL) is the bHLH domain.

In terms of assembly, homodimer. Expressed in roots and leaves.

It localises to the nucleus. The chain is Transcription factor bHLH19 (BHLH19) from Arabidopsis thaliana (Mouse-ear cress).